A 244-amino-acid chain; its full sequence is Small ribosomal subunit protein uS3 (244 aa).

The KH type-2 domain occupies 38–106; sequence IRKYLNARLA…EVQINIFEVK (69 aa). Positions 222 to 235 are enriched in basic and acidic residues; that stretch reads TGRRNDNAGGNRDK. The tract at residues 222-244 is disordered; it reads TGRRNDNAGGNRDKNFKRKRANR.

The protein belongs to the universal ribosomal protein uS3 family. Part of the 30S ribosomal subunit. Forms a tight complex with proteins S10 and S14.

Binds the lower part of the 30S subunit head. Binds mRNA in the 70S ribosome, positioning it for translation. The chain is Small ribosomal subunit protein uS3 from Parabacteroides distasonis (strain ATCC 8503 / DSM 20701 / CIP 104284 / JCM 5825 / NCTC 11152).